The sequence spans 435 residues: Eukaryotic peptide chain release factor subunit 1-2 (435 aa).

The residue at position 2 (Ala2) is an N-acetylalanine.

It belongs to the eukaryotic release factor 1 family. Heterodimer of two subunits, one of which binds GTP. Interacts with OR.

Its subcellular location is the cytoplasm. Its function is as follows. Directs the termination of nascent peptide synthesis (translation) in response to the termination codons UAA, UAG and UGA. Modulates plant growth and development. The chain is Eukaryotic peptide chain release factor subunit 1-2 from Brassica oleracea var. botrytis (Cauliflower).